Here is an 876-residue protein sequence, read N- to C-terminus: Leucine--tRNA ligase (876 aa).

The 'HIGH' region signature appears at Pro43–His53. Residues Lys632–Ser636 carry the 'KMSKS' region motif. Lys635 lines the ATP pocket.

Belongs to the class-I aminoacyl-tRNA synthetase family.

It localises to the cytoplasm. The enzyme catalyses tRNA(Leu) + L-leucine + ATP = L-leucyl-tRNA(Leu) + AMP + diphosphate. The sequence is that of Leucine--tRNA ligase from Rhizobium etli (strain ATCC 51251 / DSM 11541 / JCM 21823 / NBRC 15573 / CFN 42).